Consider the following 277-residue polypeptide: Movement protein (277 aa).

The protein belongs to the cucumovirus movement protein family.

The protein localises to the host cell junction. It localises to the host plasmodesma. In terms of biological role, transports viral genome to neighboring plant cells directly through plasmosdesmata, without any budding. The movement protein allows efficient cell to cell propagation, by bypassing the host cell wall barrier. Acts by forming a tubular structure at the host plasmodesmata, enlarging it enough to allow free passage of virion capsids. This Canna (Florist's daisy) protein is Movement protein.